Consider the following 341-residue polypeptide: L-threonine 3-dehydrogenase (341 aa).

Cys38 contacts Zn(2+). Active-site charge relay system residues include Thr40 and His43. Zn(2+)-binding residues include His63, Glu64, Cys93, Cys96, Cys99, and Cys107. Residues Ile175, Asp195, Arg200, 262-264 (LGI), and 286-287 (IY) each bind NAD(+).

This sequence belongs to the zinc-containing alcohol dehydrogenase family. Homotetramer. It depends on Zn(2+) as a cofactor.

The protein localises to the cytoplasm. The enzyme catalyses L-threonine + NAD(+) = (2S)-2-amino-3-oxobutanoate + NADH + H(+). Its pathway is amino-acid degradation; L-threonine degradation via oxydo-reductase pathway; glycine from L-threonine: step 1/2. In terms of biological role, catalyzes the NAD(+)-dependent oxidation of L-threonine to 2-amino-3-ketobutyrate. The chain is L-threonine 3-dehydrogenase from Shigella boydii serotype 4 (strain Sb227).